The chain runs to 351 residues: Glycerol-3-phosphate dehydrogenase [NAD(P)+] (351 aa).

NADPH contacts are provided by S18, W19, R38, and K122. Sn-glycerol 3-phosphate-binding residues include K122, G153, and S155. A157 is an NADPH binding site. Sn-glycerol 3-phosphate-binding residues include K208, D261, S271, R272, and N273. K208 acts as the Proton acceptor in catalysis. R272 is an NADPH binding site. E297 serves as a coordination point for NADPH.

The protein belongs to the NAD-dependent glycerol-3-phosphate dehydrogenase family.

The protein localises to the cytoplasm. It carries out the reaction sn-glycerol 3-phosphate + NAD(+) = dihydroxyacetone phosphate + NADH + H(+). The enzyme catalyses sn-glycerol 3-phosphate + NADP(+) = dihydroxyacetone phosphate + NADPH + H(+). Its pathway is membrane lipid metabolism; glycerophospholipid metabolism. In terms of biological role, catalyzes the reduction of the glycolytic intermediate dihydroxyacetone phosphate (DHAP) to sn-glycerol 3-phosphate (G3P), the key precursor for phospholipid synthesis. The protein is Glycerol-3-phosphate dehydrogenase [NAD(P)+] of Bordetella parapertussis (strain 12822 / ATCC BAA-587 / NCTC 13253).